The following is a 231-amino-acid chain: Endo-1,4-beta-xylanase A (231 aa).

The first 19 residues, 1–19 (MVSFKSLLVAVSALTGALA), serve as a signal peptide directing secretion. N-linked (GlcNAc...) asparagine glycosylation is present at Asn32. A GH11 domain is found at 41–229 (QVTGNSEGYH…SSGSSSIYVQ (189 aa)). Glu125 (nucleophile) is an active-site residue. The active-site Proton donor is Glu216.

Belongs to the glycosyl hydrolase 11 (cellulase G) family.

Its subcellular location is the secreted. The enzyme catalyses Endohydrolysis of (1-&gt;4)-beta-D-xylosidic linkages in xylans.. It participates in glycan degradation; xylan degradation. Inhibited by the proteinaceous endoxylanase inhibitor I from T.aestivum (TAXI-I). Functionally, endo-1,4-beta-xylanase involved in the hydrolysis of xylan, a major structural heterogeneous polysaccharide found in plant biomass representing the second most abundant polysaccharide in the biosphere, after cellulose. Plays an important role in causing fusarium head blight (FHB) on cereal crops. The sequence is that of Endo-1,4-beta-xylanase A (XYLA) from Gibberella zeae (strain ATCC MYA-4620 / CBS 123657 / FGSC 9075 / NRRL 31084 / PH-1) (Wheat head blight fungus).